Consider the following 72-residue polypeptide: Conotoxin Ep11.1 (72 aa).

The N-terminal stretch at 1 to 19 (MKLCVTFLLILVILPSVTG) is a signal peptide. A propeptide spanning residues 20-32 (EKSSKRTLSGAAL) is cleaved from the precursor. Cystine bridges form between Cys-39–Cys-53, Cys-46–Cys-58, Cys-52–Cys-63, and Cys-57–Cys-70.

This sequence belongs to the conotoxin I1 superfamily. Expressed by the venom duct.

The protein resides in the secreted. This is Conotoxin Ep11.1 from Conus episcopatus (Bishop's cone).